Reading from the N-terminus, the 344-residue chain is Inositol 2-dehydrogenase/D-chiro-inositol 3-dehydrogenase (344 aa).

Belongs to the Gfo/Idh/MocA family. In terms of assembly, homotetramer.

The enzyme catalyses myo-inositol + NAD(+) = scyllo-inosose + NADH + H(+). It catalyses the reaction 1D-chiro-inositol + NAD(+) = scyllo-inosine + NADH + H(+). It participates in polyol metabolism; myo-inositol degradation into acetyl-CoA; acetyl-CoA from myo-inositol: step 1/7. Functionally, involved in the oxidation of myo-inositol (MI) and D-chiro-inositol (DCI) to 2-keto-myo-inositol (2KMI or 2-inosose) and 1-keto-D-chiro-inositol (1KDCI), respectively. Can also use D-glucose and D-xylose, and shows a trace of activity with D-ribose and D-fructose. The chain is Inositol 2-dehydrogenase/D-chiro-inositol 3-dehydrogenase (iolG) from Bacillus subtilis (strain 168).